The sequence spans 423 residues: F-box/LRR-repeat protein 2 (423 aa).

The F-box domain maps to 9 to 55 (GLINKKLPKELLLRIFSFLDIVTLCRCAQISKAWNILALDGSNWQRI). LRR repeat units follow at residues 61–87 (QTDVEGRVVENISKRCGGFLRKLSLRG), 88–113 (CIGVGDSSLKTFAQNCRNIEHLNLNG), 114–139 (CTKITDSTCYSLSRFCSKLKHLDLTS), 140–165 (CVSITNSSLKGISEGCRNLEYLNLSW), 166–191 (CDQITKDGIEALVRGCRGLKALLLRG), 192–217 (CTQLEDEALKHIQNYCHELVSLNLQS), 218–243 (CSRITDEGVVQICRGCHRLQALCLSG), 244–269 (CSNLTDASLTALGLNCPRLQILEAAR), 270–295 (CSHLTDAGFTLLARNCHELEKMDLEE), 296–321 (CILITDSTLIQLSIHCPKLQALSLSH), 322–350 (CELITDDGILHLSNSTCGHERLRVLELDN), 351–375 (CLLITDVALEHLENCRGLERLELYD), and 376–401 (CQQVTRAGIKRMRAQLPHVKVHAYFA). The interaction with Calmodulin stretch occupies residues 80-90 (LRKLSLRGCIG). A Glycyl lysine isopeptide (Lys-Gly) (interchain with G-Cter in ubiquitin) cross-link involves residue Lys-201. Phosphothreonine is present on Thr-404. A lipid anchor (S-geranylgeranyl cysteine) is attached at Cys-420. The CAAX motif signature appears at 420–423 (CVIL).

Part of the SCF (SKP1-CUL1-F-box) E3 ubiquitin-protein ligase complex SCF(FBXL2) composed of CUL1, SKP1, RBX1 and FBXL2. Interacts with calmodulin; may antagonize substrate ubiquitination by SCF(FBXL2). May interact with PIK3R1. Interacts with PTPN13. As to quaternary structure, (Microbial infection) Interacts with hepatitis C virus non-structural protein 5A (NS5A) and less efficiently, with hepatitis C virus non-structural protein 5B (NS5B); a reaction crucial for hepatitis C virus RNA replication. Phosphorylated by GSK-beta (GSK3B), promoting recognition by FBXO3, leading to its ubiquitination by the SCF(FBXO3) complex. In terms of processing, ubiquitinated at Lys-201 by the SCF(FBXO3) complex in response to lipopolysaccharide (LPS), leading to its degradation by the proteasome. Expressed in brain, heart, kidney, liver, lung, pancreas and placenta.

Its subcellular location is the membrane. The protein operates within protein modification; protein ubiquitination. Its function is as follows. Calcium-activated substrate recognition component of the SCF (SKP1-cullin-F-box protein) E3 ubiquitin-protein ligase complex, SCF(FBXL2), which mediates the ubiquitination and subsequent proteasomal degradation of target proteins. Unlike many F-box proteins, FBXL2 does not seem to target phosphodegron within its substrates but rather calmodulin-binding motifs and is thereby antagonized by calmodulin. This is the case for the cyclins CCND2 and CCND3 which polyubiquitination and subsequent degradation are inhibited by calmodulin. Through CCND2 and CCND3 degradation induces cell-cycle arrest in G(0). SCF(FBXL2) also mediates PIK3R2 ubiquitination and proteasomal degradation thereby regulating phosphatidylinositol 3-kinase signaling and autophagy. PCYT1A monoubiquitination by SCF(FBXL2) and subsequent degradation regulates synthesis of phosphatidylcholine, which is utilized for formation of membranes and of pulmonary surfactant. The SCF(FBXL2) complex acts as a regulator of inflammation by mediating ubiquitination and degradation of TRAF proteins (TRAF1, TRAF2, TRAF3, TRAF4, TRAF5 and TRAF6). The SCF(FBXL2) complex acts as a negative regulator of the NLRP3 inflammasome by mediating ubiquitination and degradation of NLRP3. This is F-box/LRR-repeat protein 2 from Homo sapiens (Human).